The sequence spans 348 residues: Anthranilate phosphoribosyltransferase (348 aa).

5-phospho-alpha-D-ribose 1-diphosphate-binding positions include Gly-81, 84-85 (GD), 91-94 (NVST), 109-117 (KHGNRAVSG), and Ser-121. Residue Gly-81 coordinates anthranilate. Residue Ser-93 coordinates Mg(2+). Residue Asn-112 coordinates anthranilate. Anthranilate is bound at residue Arg-167. 2 residues coordinate Mg(2+): Asp-226 and Glu-227.

This sequence belongs to the anthranilate phosphoribosyltransferase family. Homodimer. It depends on Mg(2+) as a cofactor.

It carries out the reaction N-(5-phospho-beta-D-ribosyl)anthranilate + diphosphate = 5-phospho-alpha-D-ribose 1-diphosphate + anthranilate. It functions in the pathway amino-acid biosynthesis; L-tryptophan biosynthesis; L-tryptophan from chorismate: step 2/5. Its function is as follows. Catalyzes the transfer of the phosphoribosyl group of 5-phosphorylribose-1-pyrophosphate (PRPP) to anthranilate to yield N-(5'-phosphoribosyl)-anthranilate (PRA). The chain is Anthranilate phosphoribosyltransferase from Ectopseudomonas mendocina (strain ymp) (Pseudomonas mendocina).